A 215-amino-acid chain; its full sequence is Peroxiredoxin 1 (215 aa).

The Thioredoxin domain occupies 2-157 (KLLGEKFPSM…ILRALKALQT (156 aa)). The Cysteine sulfenic acid (-SOH) intermediate role is filled by Cys-44. Substrate is bound at residue Arg-120.

It belongs to the peroxiredoxin family. Prx6 subfamily. In terms of assembly, homodecamer. Pentamer of dimers that assemble into a ring structure.

Its subcellular location is the cytoplasm. It catalyses the reaction a hydroperoxide + [thioredoxin]-dithiol = an alcohol + [thioredoxin]-disulfide + H2O. In terms of biological role, thiol-specific peroxidase that catalyzes the reduction of hydrogen peroxide and organic hydroperoxides to water and alcohols, respectively. Plays a role in cell protection against oxidative stress by detoxifying peroxides. The chain is Peroxiredoxin 1 from Caldanaerobacter subterraneus subsp. tengcongensis (strain DSM 15242 / JCM 11007 / NBRC 100824 / MB4) (Thermoanaerobacter tengcongensis).